Consider the following 422-residue polypeptide: Replication factor C large subunit (422 aa).

63-70 (GPPGVGKT) contacts ATP.

Belongs to the activator 1 small subunits family. RfcL subfamily. In terms of assembly, heteromultimer composed of small subunits (RfcS) and large subunits (RfcL).

Functionally, part of the RFC clamp loader complex which loads the PCNA sliding clamp onto DNA. This Pyrobaculum aerophilum (strain ATCC 51768 / DSM 7523 / JCM 9630 / CIP 104966 / NBRC 100827 / IM2) protein is Replication factor C large subunit.